The sequence spans 247 residues: Phosphoribosylaminoimidazole-succinocarboxamide synthase (247 aa).

The protein belongs to the SAICAR synthetase family.

The enzyme catalyses 5-amino-1-(5-phospho-D-ribosyl)imidazole-4-carboxylate + L-aspartate + ATP = (2S)-2-[5-amino-1-(5-phospho-beta-D-ribosyl)imidazole-4-carboxamido]succinate + ADP + phosphate + 2 H(+). It functions in the pathway purine metabolism; IMP biosynthesis via de novo pathway; 5-amino-1-(5-phospho-D-ribosyl)imidazole-4-carboxamide from 5-amino-1-(5-phospho-D-ribosyl)imidazole-4-carboxylate: step 1/2. In Prochlorococcus marinus (strain NATL1A), this protein is Phosphoribosylaminoimidazole-succinocarboxamide synthase.